The primary structure comprises 322 residues: F-box protein At2g16300 (322 aa).

One can recognise an F-box domain in the interval 2-50 (ADWSLLPNDLLELIVGHLETSFEIVLFRSVCSSWRSVVPPQDQSRCLSI).

The chain is F-box protein At2g16300 from Arabidopsis thaliana (Mouse-ear cress).